The sequence spans 171 residues: tRNA-splicing endonuclease subunit Sen15 (171 aa).

A disordered region spans residues 1-35 (MEERGDSEPTPGCSGLGPGGVRGFGDGGGAPSWAP). The residue at position 7 (serine 7) is a Phosphoserine. A compositionally biased stretch (gly residues) spans 14-30 (SGLGPGGVRGFGDGGGA). Serine 168 carries the phosphoserine modification.

This sequence belongs to the SEN15 family. As to quaternary structure, homodimer. tRNA splicing endonuclease is a heterotetramer composed of TSEN2, TSEN15, TSEN34/LENG5 and TSEN54. tRNA splicing endonuclease complex also contains proteins of the Pre-mRNA 3' end processing machinery, such as CLP1, CPSF1, CPSF4 and CSTF2. Widely expressed. Highly expressed in testis and uterus.

Its subcellular location is the nucleus. It is found in the nucleolus. Non-catalytic subunit of the tRNA-splicing endonuclease complex, a complex responsible for identification and cleavage of the splice sites in pre-tRNA. It cleaves pre-tRNA at the 5' and 3' splice sites to release the intron. The products are an intron and two tRNA half-molecules bearing 2',3' cyclic phosphate and 5'-OH termini. There are no conserved sequences at the splice sites, but the intron is invariably located at the same site in the gene, placing the splice sites an invariant distance from the constant structural features of the tRNA body. The tRNA splicing endonuclease is also involved in mRNA processing via its association with pre-mRNA 3'-end processing factors, establishing a link between pre-tRNA splicing and pre-mRNA 3'-end formation, suggesting that the endonuclease subunits function in multiple RNA-processing events. The polypeptide is tRNA-splicing endonuclease subunit Sen15 (TSEN15) (Homo sapiens (Human)).